A 129-amino-acid chain; its full sequence is Iron-sulfur cluster assembly 1 homolog, mitochondrial (129 aa).

The N-terminal 12 residues, Met-1–Ala-12, are a transit peptide targeting the mitochondrion. Cys-57, Cys-121, and Cys-123 together coordinate Fe cation.

The protein belongs to the HesB/IscA family. In terms of assembly, interacts with CRY2, but not with CRY1 (in vitro).

It is found in the mitochondrion. Its function is as follows. Involved in the maturation of mitochondrial 4Fe-4S proteins functioning late in the iron-sulfur cluster assembly pathway. Probably involved in the binding of an intermediate of Fe/S cluster assembly. In Mus musculus (Mouse), this protein is Iron-sulfur cluster assembly 1 homolog, mitochondrial (Isca1).